Here is a 339-residue protein sequence, read N- to C-terminus: GTPase Obg (339 aa).

The region spanning 1-159 (MKFVDEAFVR…RELKLELKLL (159 aa)) is the Obg domain. Positions 127 to 147 (NTHFKSSTNRAPRRTTSGEEG) are disordered. Residues 160 to 333 (ADVGLLGLPN…LCYDLMSFLE (174 aa)) form the OBG-type G domain. Residues 166 to 173 (GLPNAGKS), 191 to 195 (FTTLY), 213 to 216 (DIPG), 283 to 286 (NKID), and 314 to 316 (SAI) each bind GTP. Positions 173 and 193 each coordinate Mg(2+).

Belongs to the TRAFAC class OBG-HflX-like GTPase superfamily. OBG GTPase family. In terms of assembly, monomer. Mg(2+) is required as a cofactor.

Its subcellular location is the cytoplasm. Functionally, an essential GTPase which binds GTP, GDP and possibly (p)ppGpp with moderate affinity, with high nucleotide exchange rates and a fairly low GTP hydrolysis rate. Plays a role in control of the cell cycle, stress response, ribosome biogenesis and in those bacteria that undergo differentiation, in morphogenesis control. The chain is GTPase Obg from Coxiella burnetii (strain CbuK_Q154) (Coxiella burnetii (strain Q154)).